Reading from the N-terminus, the 289-residue chain is Urease accessory protein UreD (289 aa).

The protein belongs to the UreD family. As to quaternary structure, ureD, UreF and UreG form a complex that acts as a GTP-hydrolysis-dependent molecular chaperone, activating the urease apoprotein by helping to assemble the nickel containing metallocenter of UreC. The UreE protein probably delivers the nickel.

The protein localises to the cytoplasm. Its function is as follows. Required for maturation of urease via the functional incorporation of the urease nickel metallocenter. This chain is Urease accessory protein UreD, found in Cupriavidus necator (strain ATCC 17699 / DSM 428 / KCTC 22496 / NCIMB 10442 / H16 / Stanier 337) (Ralstonia eutropha).